The following is a 220-amino-acid chain: CRISPR system Cms endoribonuclease Csm3 (220 aa).

The protein belongs to the CRISPR-associated Csm3 family. Part of the Csm effector complex that includes at least Cas10(1), Csm2(3), Csm3(5), Csm4(1), Csm5(1) and mature crRNA. The Csm complex is elongated and slightly twisted with a maximal length of 215 Angstroms and a diameter of 75-80 Angstroms. It has been modeled to have a central protein filamant of Csm3 subunits along which the dsRNA helix of paired crRNA and target RNA binds. The filament is capped at one end by Cas10 and Csm4 and at the other end by Csm5; ssDNA is thought to bind to the N-terminal HD domain of Cas10. Csm with a precursor crRNA does not include Csm5, while Cas6, the enzyme probably involved in pre-crRNA processing, is found associated with a subset of the Csm complex. A metal cation is required as a cofactor.

Target ssRNase is inhibited by EDTA. Its function is as follows. CRISPR (clustered regularly interspaced short palindromic repeat) is an adaptive immune system that provides protection against mobile genetic elements (viruses, transposable elements and conjugative plasmids). CRISPR clusters contain spacers, sequences complementary to antecedent mobile elements, and target invading nucleic acids. CRISPR clusters are transcribed and processed into CRISPR RNA (crRNA). The type III-A Csm effector complex binds crRNA and acts as a crRNA-guided RNase, DNase and cyclic oligoadenylate synthase; binding of target RNA cognate to the crRNA is required for all activities. In a heterologous host this Csm effector complex restricts ssRNA phage MS2, suggesting it may target RNA viruses in vivo. Functionally, csm functions as a non-specific ssDNase. Base-pairing between crRNA and target RNA to form a ternary Csm complex activates a ssDNase activity; target RNA cleavage suppresses the ssDNase, a temporal control that prevents uncontrolled DNA degradation. Viral RNA transcripts probably tether the Csm complex to the viral genome, recruiting Cas10 ssDNA activity which is able to degrade DNA in the transcription bubble, spatially controlling the DNase activity. This subunit has the target ssRNA endonuclease activity; it cleaves multiple sites in the target RNA at 6 nucleotide intervals. The number of cleavage sites in the target RNA correlates with the number of Csm3 subunits in the Csm effector complex. In the Csm complex target RNA and ssDNA are cleaved simultaneously, although RNase activity (of Csm3) is much faster. RNA cleavage by Csm3 is not required for ssDNase activity as Csm complex with inactive Csm3 still has ssDNase activity; however as the cleaved target RNA products dissociate away ssDNase activity decreases. This chain is CRISPR system Cms endoribonuclease Csm3, found in Streptococcus thermophilus.